Here is a 456-residue protein sequence, read N- to C-terminus: Bifunctional protein GlmU (456 aa).

Positions 1–229 are pyrophosphorylase; that stretch reads MSSHAMSVVI…LSEVEGVNNR (229 aa). UDP-N-acetyl-alpha-D-glucosamine-binding positions include 11–14, Lys25, Gln76, 81–82, 103–105, Gly140, Glu154, Asn169, and Asn227; these read LAAG, GT, and YGD. Mg(2+) is bound at residue Asp105. Position 227 (Asn227) interacts with Mg(2+). Residues 230–250 form a linker region; that stretch reads LQLARLEHVYQAEQAEKLLLA. An N-acetyltransferase region spans residues 251–456; that stretch reads GVMLRDPARF…QGWRRPVKKK (206 aa). Residues Arg333 and Lys351 each coordinate UDP-N-acetyl-alpha-D-glucosamine. The active-site Proton acceptor is the His363. UDP-N-acetyl-alpha-D-glucosamine contacts are provided by Tyr366 and Asn377. Acetyl-CoA contacts are provided by residues Ala380, 386–387, Ser405, Ala423, and Arg440; that span reads NY.

This sequence in the N-terminal section; belongs to the N-acetylglucosamine-1-phosphate uridyltransferase family. The protein in the C-terminal section; belongs to the transferase hexapeptide repeat family. As to quaternary structure, homotrimer. Mg(2+) is required as a cofactor.

Its subcellular location is the cytoplasm. The catalysed reaction is alpha-D-glucosamine 1-phosphate + acetyl-CoA = N-acetyl-alpha-D-glucosamine 1-phosphate + CoA + H(+). It carries out the reaction N-acetyl-alpha-D-glucosamine 1-phosphate + UTP + H(+) = UDP-N-acetyl-alpha-D-glucosamine + diphosphate. Its pathway is nucleotide-sugar biosynthesis; UDP-N-acetyl-alpha-D-glucosamine biosynthesis; N-acetyl-alpha-D-glucosamine 1-phosphate from alpha-D-glucosamine 6-phosphate (route II): step 2/2. It functions in the pathway nucleotide-sugar biosynthesis; UDP-N-acetyl-alpha-D-glucosamine biosynthesis; UDP-N-acetyl-alpha-D-glucosamine from N-acetyl-alpha-D-glucosamine 1-phosphate: step 1/1. It participates in bacterial outer membrane biogenesis; LPS lipid A biosynthesis. In terms of biological role, catalyzes the last two sequential reactions in the de novo biosynthetic pathway for UDP-N-acetylglucosamine (UDP-GlcNAc). The C-terminal domain catalyzes the transfer of acetyl group from acetyl coenzyme A to glucosamine-1-phosphate (GlcN-1-P) to produce N-acetylglucosamine-1-phosphate (GlcNAc-1-P), which is converted into UDP-GlcNAc by the transfer of uridine 5-monophosphate (from uridine 5-triphosphate), a reaction catalyzed by the N-terminal domain. This Cronobacter sakazakii (strain ATCC BAA-894) (Enterobacter sakazakii) protein is Bifunctional protein GlmU.